Consider the following 279-residue polypeptide: 3-methyl-2-oxobutanoate hydroxymethyltransferase (279 aa).

Mg(2+) contacts are provided by Asp-53 and Asp-92. Residues 53 to 54 (DS), Asp-92, and Lys-122 contribute to the 3-methyl-2-oxobutanoate site. Mg(2+) is bound at residue Glu-124. Residue Glu-191 is the Proton acceptor of the active site.

It belongs to the PanB family. As to quaternary structure, homodecamer; pentamer of dimers. It depends on Mg(2+) as a cofactor.

It localises to the cytoplasm. The catalysed reaction is 3-methyl-2-oxobutanoate + (6R)-5,10-methylene-5,6,7,8-tetrahydrofolate + H2O = 2-dehydropantoate + (6S)-5,6,7,8-tetrahydrofolate. The protein operates within cofactor biosynthesis; (R)-pantothenate biosynthesis; (R)-pantoate from 3-methyl-2-oxobutanoate: step 1/2. Functionally, catalyzes the reversible reaction in which hydroxymethyl group from 5,10-methylenetetrahydrofolate is transferred onto alpha-ketoisovalerate to form ketopantoate. In Maricaulis maris (strain MCS10) (Caulobacter maris), this protein is 3-methyl-2-oxobutanoate hydroxymethyltransferase.